Reading from the N-terminus, the 394-residue chain is Probable aspartate/prephenate aminotransferase (394 aa).

Residues G40, W126, and N176 each coordinate L-aspartate. K239 carries the post-translational modification N6-(pyridoxal phosphate)lysine. An L-aspartate-binding site is contributed by R370.

It belongs to the class-I pyridoxal-phosphate-dependent aminotransferase family. Homodimer. Pyridoxal 5'-phosphate is required as a cofactor.

The protein localises to the cytoplasm. It catalyses the reaction L-aspartate + 2-oxoglutarate = oxaloacetate + L-glutamate. The catalysed reaction is L-arogenate + oxaloacetate = prephenate + L-aspartate. Functionally, catalyzes the reversible conversion of aspartate and 2-oxoglutarate to glutamate and oxaloacetate. Can also transaminate prephenate in the presence of aspartate. The protein is Probable aspartate/prephenate aminotransferase (aspC) of Aquifex aeolicus (strain VF5).